We begin with the raw amino-acid sequence, 328 residues long: Malate dehydrogenase 2 (328 aa).

12–18 (GAAGQIA) is a binding site for NAD(+). 2 residues coordinate substrate: Arg-93 and Arg-99. NAD(+)-binding positions include Asn-106, Gln-113, and 130–132 (VGN). The substrate site is built by Asn-132 and Arg-163. His-188 acts as the Proton acceptor in catalysis.

Belongs to the LDH/MDH superfamily. MDH type 2 family.

The enzyme catalyses (S)-malate + NAD(+) = oxaloacetate + NADH + H(+). Its function is as follows. Catalyzes the reversible oxidation of malate to oxaloacetate. This is Malate dehydrogenase 2 from Burkholderia vietnamiensis (strain G4 / LMG 22486) (Burkholderia cepacia (strain R1808)).